Consider the following 199-residue polypeptide: RNA-free ribonuclease P (199 aa).

It belongs to the HARP family.

It catalyses the reaction Endonucleolytic cleavage of RNA, removing 5'-extranucleotides from tRNA precursor.. In terms of biological role, RNA-free RNase P that catalyzes the removal of the 5'-leader sequence from pre-tRNA to produce the mature 5'-terminus. This Thermococcus onnurineus (strain NA1) protein is RNA-free ribonuclease P.